Consider the following 255-residue polypeptide: Large ribosomal subunit protein uL6m (255 aa).

Residues 39-61 (AARRNFSATTTRPSKLGRTPLSI) form a disordered region.

The protein belongs to the universal ribosomal protein uL6 family. Component of the mitochondrial large ribosomal subunit (mt-LSU). Mature N.crassa 74S mitochondrial ribosomes consist of a small (37S) and a large (54S) subunit. The 37S small subunit contains a 16S ribosomal RNA (16S mt-rRNA) and 32 different proteins. The 54S large subunit contains a 23S rRNA (23S mt-rRNA) and 42 different proteins.

The protein resides in the mitochondrion. Its function is as follows. Component of the mitochondrial ribosome (mitoribosome), a dedicated translation machinery responsible for the synthesis of mitochondrial genome-encoded proteins, including at least some of the essential transmembrane subunits of the mitochondrial respiratory chain. The mitoribosomes are attached to the mitochondrial inner membrane and translation products are cotranslationally integrated into the membrane. The sequence is that of Large ribosomal subunit protein uL6m (mrpl6) from Neurospora crassa (strain ATCC 24698 / 74-OR23-1A / CBS 708.71 / DSM 1257 / FGSC 987).